The following is a 319-amino-acid chain: Cytochrome f (319 aa).

The N-terminal stretch at 1–34 is a signal peptide; sequence MQNRNTYEWTKKMTRLISVLVMIHIITRTSISNA. Positions 35, 55, 58, and 59 each coordinate heme. The helical transmembrane segment at 285–305 threads the bilayer; it reads VKGLLLFLASVILAQIFLVLK.

Belongs to the cytochrome f family. The 4 large subunits of the cytochrome b6-f complex are cytochrome b6, subunit IV (17 kDa polypeptide, petD), cytochrome f and the Rieske protein, while the 4 small subunits are PetG, PetL, PetM and PetN. The complex functions as a dimer. The cofactor is heme.

Its subcellular location is the plastid. It is found in the chloroplast thylakoid membrane. Its function is as follows. Component of the cytochrome b6-f complex, which mediates electron transfer between photosystem II (PSII) and photosystem I (PSI), cyclic electron flow around PSI, and state transitions. The chain is Cytochrome f from Pinus koraiensis (Korean pine).